The primary structure comprises 148 residues: NADH-ubiquinone oxidoreductase chain 3 (148 aa).

A run of 3 helical transmembrane segments spans residues 19–39, 70–90, and 99–119; these read FYMI…YIIT, FILI…ILPY, and IYGL…FIIE.

This sequence belongs to the complex I subunit 3 family.

The protein resides in the mitochondrion membrane. It catalyses the reaction a ubiquinone + NADH + 5 H(+)(in) = a ubiquinol + NAD(+) + 4 H(+)(out). In terms of biological role, core subunit of the mitochondrial membrane respiratory chain NADH dehydrogenase (Complex I) that is believed to belong to the minimal assembly required for catalysis. Complex I functions in the transfer of electrons from NADH to the respiratory chain. The immediate electron acceptor for the enzyme is believed to be ubiquinone. The chain is NADH-ubiquinone oxidoreductase chain 3 (ND3) from Wickerhamomyces canadensis (Yeast).